The primary structure comprises 384 residues: S-adenosylmethionine synthase (384 aa).

An ATP-binding site is contributed by His-15. Asp-17 is a binding site for Mg(2+). Glu-43 contacts K(+). Residues Glu-56 and Gln-99 each coordinate L-methionine. The flexible loop stretch occupies residues 99–109 (QSPDINQGVDR). Residues 164–166 (DAK), 230–231 (RF), Asp-239, 245–246 (RK), Ala-262, and Lys-266 each bind ATP. Asp-239 lines the L-methionine pocket. Lys-270 provides a ligand contact to L-methionine.

Belongs to the AdoMet synthase family. As to quaternary structure, homotetramer; dimer of dimers. It depends on Mg(2+) as a cofactor. The cofactor is K(+).

It localises to the cytoplasm. It carries out the reaction L-methionine + ATP + H2O = S-adenosyl-L-methionine + phosphate + diphosphate. Its pathway is amino-acid biosynthesis; S-adenosyl-L-methionine biosynthesis; S-adenosyl-L-methionine from L-methionine: step 1/1. Its function is as follows. Catalyzes the formation of S-adenosylmethionine (AdoMet) from methionine and ATP. The overall synthetic reaction is composed of two sequential steps, AdoMet formation and the subsequent tripolyphosphate hydrolysis which occurs prior to release of AdoMet from the enzyme. This Salmonella gallinarum (strain 287/91 / NCTC 13346) protein is S-adenosylmethionine synthase.